The primary structure comprises 287 residues: Pyridoxal kinase PdxY (287 aa).

Substrate-binding positions include serine 9 and 44–45; that span reads TQ. The ATP site is built by aspartate 111, glutamate 147, and lysine 180. Residue aspartate 221 coordinates substrate.

It belongs to the pyridoxine kinase family. PdxY subfamily. Homodimer. Mg(2+) serves as cofactor.

The catalysed reaction is pyridoxal + ATP = pyridoxal 5'-phosphate + ADP + H(+). It participates in cofactor metabolism; pyridoxal 5'-phosphate salvage; pyridoxal 5'-phosphate from pyridoxal: step 1/1. Its function is as follows. Pyridoxal kinase involved in the salvage pathway of pyridoxal 5'-phosphate (PLP). Catalyzes the phosphorylation of pyridoxal to PLP. The protein is Pyridoxal kinase PdxY of Paraburkholderia phymatum (strain DSM 17167 / CIP 108236 / LMG 21445 / STM815) (Burkholderia phymatum).